The primary structure comprises 655 residues: SRSF protein kinase 1 (655 aa).

Residues 1 to 57 (MERKVLALQARKKRTKAKKDKAQRKSETQHRGSAPHSESDLPEQEEEILGSDDDEQE) are disordered. Residues 10–22 (ARKKRTKAKKDKA) show a composition bias toward basic residues. Residues 40-57 (DLPEQEEEILGSDDDEQE) are compositionally biased toward acidic residues. Serine 51 carries the phosphoserine; by CK2 modification. The region spanning 80–653 (YHVIRKLGWG…AAECLRHPWL (574 aa)) is the Protein kinase domain. ATP-binding positions include 86 to 94 (LGWGHFSTV), lysine 109, and 166 to 168 (EVL). Residue aspartate 213 is the Proton acceptor of the active site. 2 disordered regions span residues 238–341 (WQRS…QDQT) and 397–417 (FLSSQNGDSSTSQETDSCTPI). The segment covering 265–276 (KNKKKKLKKKQK) has biased composition (basic residues). Composition is skewed to basic and acidic residues over residues 277–288 (RQAELLEKRMQE) and 304–318 (NKQEESESPVERPLK). A phosphoserine mark is found at serine 309, serine 311, and serine 333. The residue at position 555 (serine 555) is a Phosphoserine; by CK2.

The protein belongs to the protein kinase superfamily. CMGC Ser/Thr protein kinase family. In terms of assembly, monomer. Isoform 2 is found in a multisubunit complex containing seven proteins, named toposome, which separates entangled circular chromatin DNA during chromosome segregation. Isoform 2 interacts with DNAJC8 and AHSA1/AHA1 and this mediates formation of a complex with the Hsp70 /Hsp90 machinery. Isoform 1 is found in a complex with: DHX9, MOV10, MATR3, HNRNPU, NCL, DDX21, HSD17B4, PABPC1, HNRNPM, IGF2BP1, SYNCRIP, RPL3, VIM, YBX1, NPM1, HNRNPA2B1, HNRNPC, RPLP0, RPL7A and RALY. Isoform 2 binds to IGF2BP1, SYNCRIP, HNRNPA2B1 and HNRNPC. Isoform 1 and isoform 2 interact with SAFB which inhibits its activity. Isoform 2 interacts with SAFB2 which inhibits its activity. (Microbial infection) Isoform 2 interacts with HHV-1 ICP27 protein. It depends on Mg(2+) as a cofactor. In terms of tissue distribution, isoform 2 is predominantly expressed in the testis but is also present at lower levels in heart, ovary, small intestine, liver, kidney, pancreas and skeletal muscle. Isoform 1 is only seen in the testis, at lower levels than isoform 2. Highly expressed in different erythroid and lymphoid cell lines, with isoform 2 being far more abundant than isoform 1.

The protein resides in the cytoplasm. It is found in the nucleus. Its subcellular location is the nucleus matrix. It localises to the microsome. The protein localises to the nucleoplasm. The protein resides in the nucleus speckle. It is found in the chromosome. It carries out the reaction L-seryl-[protein] + ATP = O-phospho-L-seryl-[protein] + ADP + H(+). The enzyme catalyses L-threonyl-[protein] + ATP = O-phospho-L-threonyl-[protein] + ADP + H(+). Activated by phosphorylation on Ser-51 and Ser-555. In terms of biological role, serine/arginine-rich protein-specific kinase which specifically phosphorylates its substrates at serine residues located in regions rich in arginine/serine dipeptides, known as RS domains and is involved in the phosphorylation of SR splicing factors and the regulation of splicing. Plays a central role in the regulatory network for splicing, controlling the intranuclear distribution of splicing factors in interphase cells and the reorganization of nuclear speckles during mitosis. Can influence additional steps of mRNA maturation, as well as other cellular activities, such as chromatin reorganization in somatic and sperm cells and cell cycle progression. Isoform 2 phosphorylates SFRS2, ZRSR2, LBR and PRM1. Isoform 2 phosphorylates SRSF1 using a directional (C-terminal to N-terminal) and a dual-track mechanism incorporating both processive phosphorylation (in which the kinase stays attached to the substrate after each round of phosphorylation) and distributive phosphorylation steps (in which the kinase and substrate dissociate after each phosphorylation event). The RS domain of SRSF1 binds first to a docking groove in the large lobe of the kinase domain of SRPK1. This induces certain structural changes in SRPK1 and/or RRM2 domain of SRSF1, allowing RRM2 to bind the kinase and initiate phosphorylation. The cycles continue for several phosphorylation steps in a processive manner (steps 1-8) until the last few phosphorylation steps (approximately steps 9-12). During that time, a mechanical stress induces the unfolding of the beta-4 motif in RRM2, which then docks at the docking groove of SRPK1. This also signals RRM2 to begin to dissociate, which facilitates SRSF1 dissociation after phosphorylation is completed. Isoform 2 can mediate hepatitis B virus (HBV) core protein phosphorylation. It plays a negative role in the regulation of HBV replication through a mechanism not involving the phosphorylation of the core protein but by reducing the packaging efficiency of the pregenomic RNA (pgRNA) without affecting the formation of the viral core particles. Isoform 1 and isoform 2 can induce splicing of exon 10 in MAPT/TAU. The ratio of isoform 1/isoform 2 plays a decisive role in determining cell fate in K-562 leukaemic cell line: isoform 2 favors proliferation where as isoform 1 favors differentiation. The polypeptide is SRSF protein kinase 1 (Homo sapiens (Human)).